Here is a 400-residue protein sequence, read N- to C-terminus: NADH dehydrogenase-like protein Rv1812c (400 aa).

It belongs to the NADH dehydrogenase family. FAD is required as a cofactor.

This is NADH dehydrogenase-like protein Rv1812c from Mycobacterium tuberculosis (strain ATCC 25618 / H37Rv).